The chain runs to 306 residues: Ribonuclease H2 subunit B (306 aa).

The interval 232–285 is disordered; that stretch reads LPDLSSPTPEPPVKKRRVSDAPVEADEDYTKYNSDNKSRKSNSKMTAAQKSLAK. Over residues 259–269 the composition is skewed to basic and acidic residues; that stretch reads DYTKYNSDNKS.

The protein belongs to the RNase H2 subunit B family. As to quaternary structure, the RNase H2 complex is a heterotrimer composed of the catalytic subunit RNASEH2A and the non-catalytic subunits RNASEH2B and RNASEH2C.

It is found in the nucleus. In terms of biological role, non catalytic subunit of RNase H2, an endonuclease that specifically degrades the RNA of RNA:DNA hybrids. Participates in DNA replication, possibly by mediating the removal of lagging-strand Okazaki fragment RNA primers during DNA replication. Mediates the excision of single ribonucleotides from DNA:RNA duplexes. The sequence is that of Ribonuclease H2 subunit B (rnaseh2b) from Xenopus laevis (African clawed frog).